Here is a 448-residue protein sequence, read N- to C-terminus: Exodeoxyribonuclease 7 large subunit (448 aa).

This sequence belongs to the XseA family. Heterooligomer composed of large and small subunits.

It localises to the cytoplasm. It carries out the reaction Exonucleolytic cleavage in either 5'- to 3'- or 3'- to 5'-direction to yield nucleoside 5'-phosphates.. In terms of biological role, bidirectionally degrades single-stranded DNA into large acid-insoluble oligonucleotides, which are then degraded further into small acid-soluble oligonucleotides. In Shewanella sp. (strain ANA-3), this protein is Exodeoxyribonuclease 7 large subunit.